We begin with the raw amino-acid sequence, 197 residues long: Holliday junction branch migration complex subunit RuvA (197 aa).

Residues 1–63 are domain I; the sequence is MIALLNGQLI…EDALLLFGFL (63 aa). Positions 64-142 are domain II; the sequence is TETEKDLFGL…PVQAVPGNAP (79 aa). The flexible linker stretch occupies residues 142-146; it reads PLPAE. The interval 147 to 197 is domain III; the sequence is TAGDLREDALSALVNLGYKENLSRKALDGIDTAPDAPLEDILKQALKLLMR.

Belongs to the RuvA family. In terms of assembly, homotetramer. Forms an RuvA(8)-RuvB(12)-Holliday junction (HJ) complex. HJ DNA is sandwiched between 2 RuvA tetramers; dsDNA enters through RuvA and exits via RuvB. An RuvB hexamer assembles on each DNA strand where it exits the tetramer. Each RuvB hexamer is contacted by two RuvA subunits (via domain III) on 2 adjacent RuvB subunits; this complex drives branch migration. In the full resolvosome a probable DNA-RuvA(4)-RuvB(12)-RuvC(2) complex forms which resolves the HJ.

It is found in the cytoplasm. The RuvA-RuvB-RuvC complex processes Holliday junction (HJ) DNA during genetic recombination and DNA repair, while the RuvA-RuvB complex plays an important role in the rescue of blocked DNA replication forks via replication fork reversal (RFR). RuvA specifically binds to HJ cruciform DNA, conferring on it an open structure. The RuvB hexamer acts as an ATP-dependent pump, pulling dsDNA into and through the RuvAB complex. HJ branch migration allows RuvC to scan DNA until it finds its consensus sequence, where it cleaves and resolves the cruciform DNA. This chain is Holliday junction branch migration complex subunit RuvA, found in Syntrophotalea carbinolica (strain DSM 2380 / NBRC 103641 / GraBd1) (Pelobacter carbinolicus).